The chain runs to 986 residues: Ephrin type-A receptor 4 (986 aa).

Residues 1–19 (MAGVPVGALLPLLVGVCGA) form the signal peptide. The Extracellular portion of the chain corresponds to 20–547 (VTGSRVYPAN…PIIGDGTNPT (528 aa)). The Eph LBD domain occupies 30–209 (EVTLLDSRSV…FYKKCPLTVR (180 aa)). Asn235, Asn340, and Asn408 each carry an N-linked (GlcNAc...) asparagine glycan. Fibronectin type-III domains follow at residues 328–439 (PPSA…TNQA) and 440–537 (APSP…TVPS). Residues 548–569 (VLLVSVAGSVVLVVILIAAFVI) form a helical membrane-spanning segment. The Cytoplasmic portion of the chain corresponds to 570 to 986 (SRRRSKYSKA…QQMHGRMVPV (417 aa)). Residues Tyr596 and Tyr602 each carry the phosphotyrosine; by autocatalysis modification. The Protein kinase domain occupies 621–882 (IKIEKVIGVG…QIVNMLDKLI (262 aa)). Residues 627-635 (IGVGEFGEV) and Lys653 each bind ATP. Asp746 acts as the Proton acceptor in catalysis. A phosphotyrosine; by autocatalysis mark is found at Tyr779 and Tyr928. Residues 911–975 (SAVVSVSDWL…LSSVQAMRSQ (65 aa)) enclose the SAM domain. Positions 984–986 (VPV) match the PDZ-binding motif.

This sequence belongs to the protein kinase superfamily. Tyr protein kinase family. Ephrin receptor subfamily. Interacts with the src family kinase, p59-Fyn, through the major phosphorylation site at position Tyr-602. Interacts (via PDZ motif) with SIPA1L1 (via PDZ domain); controls neuronal morphology through regulation of the RAP1 (RAP1A or RAP1B) and RAP2 (RAP2A, RAP2B or RAP2C) GTPases. Expressed at high levels in brain, with expression also detected in the kidney, lung, muscle and thymus.

The protein localises to the cell membrane. It is found in the early endosome. It catalyses the reaction L-tyrosyl-[protein] + ATP = O-phospho-L-tyrosyl-[protein] + ADP + H(+). In terms of biological role, receptor tyrosine kinase which binds membrane-bound ephrin family ligands residing on adjacent cells, leading to contact-dependent bidirectional signaling into neighboring cells. The signaling pathway downstream of the receptor is referred to as forward signaling while the signaling pathway downstream of the ephrin ligand is referred to as reverse signaling. Highly promiscuous, it has the unique property among Eph receptors to bind and to be physiologically activated by both GPI-anchored ephrin-A and transmembrane ephrin-B ligands including EFNA1 and EFNB3. Upon activation by ephrin ligands, modulates cell morphology and integrin-dependent cell adhesion through regulation of the Rac, Rap and Rho GTPases activity. Plays an important role in the development of the nervous system controlling different steps of axonal guidance including the establishment of the corticospinal projections. The polypeptide is Ephrin type-A receptor 4 (EPHA4) (Gallus gallus (Chicken)).